Here is a 274-residue protein sequence, read N- to C-terminus: Phloretin hydrolase (274 aa).

Residues His123, Glu154, His251, and Glu255 each contribute to the Zn(2+) site.

Belongs to the DAPG/phloretin hydrolase family. In terms of assembly, homodimer. It depends on Zn(2+) as a cofactor.

The protein localises to the cytoplasm. It carries out the reaction phloretin + H2O = phloretate + 1,3,5-trihydroxybenzene + H(+). In terms of biological role, catalyzes the hydrolytic C-C cleavage of phloretin to phloroglucinol and 3-(4-hydroxyphenyl)propionic acid during flavonoid degradation. Also hydrolyzes other C-acylated phenols. The polypeptide is Phloretin hydrolase (phy) (Eubacterium ramulus).